Consider the following 212-residue polypeptide: Proteasome subunit beta type-2 (212 aa).

It belongs to the peptidase T1B family. The 26S proteasome consists of a 20S proteasome core and two 19S regulatory subunits. The 20S proteasome core is composed of 28 subunits that are arranged in four stacked rings, resulting in a barrel-shaped structure. The two end rings are each formed by seven alpha subunits, and the two central rings are each formed by seven beta subunits. The catalytic chamber with the active sites is on the inside of the barrel.

The protein localises to the cytoplasm. Its subcellular location is the nucleus. Its function is as follows. Non-catalytic component of the proteasome, a multicatalytic proteinase complex which is characterized by its ability to cleave peptides with Arg, Phe, Tyr, Leu, and Glu adjacent to the leaving group at neutral or slightly basic pH. The proteasome has an ATP-dependent proteolytic activity. The chain is Proteasome subunit beta type-2 (PBD1) from Oryza sativa subsp. japonica (Rice).